Consider the following 22-residue polypeptide: Putative lactoylglutathione lyase (22 aa).

A disordered region spans residues 1–22 (ITACLDPDGWKEPGPLPGISTK). Glu12 (proton donor/acceptor) is an active-site residue.

Belongs to the glyoxalase I family. Requires Zn(2+) as cofactor.

The catalysed reaction is (R)-S-lactoylglutathione = methylglyoxal + glutathione. It participates in secondary metabolite metabolism; methylglyoxal degradation; (R)-lactate from methylglyoxal: step 1/2. Catalyzes the conversion of hemimercaptal, formed from methylglyoxal and glutathione, to S-lactoylglutathione. This chain is Putative lactoylglutathione lyase, found in Pinus strobus (Eastern white pine).